The sequence spans 255 residues: MDIDPYSVLGVEKDASDELIRRAYRKKALQHHPDRIHDEEKKVEARIEFDKVAIAYGVLSDKKRRKHYDKTGQLRETDADIDFDWKEWLDELYQGVVSGETLNEFKASYQYSEEEKCDVLKAYEKGKGSMDVILEEVMCCEISDEDRFRQVINNAIKDGKISKYKRFAPNEKKRKRRAKAAEREAQEAEELSMELGLDENLKKRRKAGASDEEALSALIRSRQKSRMYNLISNLESKYSKSSTKPKKSKKSRSKE.

One can recognise a J domain in the interval 4 to 72 (DPYSVLGVEK…KRRKHYDKTG (69 aa)). Composition is skewed to basic residues over residues 167–178 (FAPNEKKRKRRA) and 243–255 (TKPK…RSKE). Disordered stretches follow at residues 167–215 (FAPN…EEAL) and 230–255 (LISN…RSKE).

The protein belongs to the DnaJ family.

The protein localises to the nucleus. It localises to the nucleolus. This is an uncharacterized protein from Schizosaccharomyces pombe (strain 972 / ATCC 24843) (Fission yeast).